A 348-amino-acid polypeptide reads, in one-letter code: MDASKSKALEAALSQIDRQFGKGTVMRLGDKGREKMPAISTGSLGLDVALGIGGLPKGRIVEIYGPESSGKTTLTLQVIAEAQRQGGTCAFVDAEHALDPVYAEKLGVNVDDLIISQPDNGEQALEVADMLVRSGAVDVLVVDSVAALTPKAEIEGDMGDHHVGLQARLMSQALRKITGNIKNANCLAIFINQIRMKIGVMFGNPETTTGGNALKFYSSVRLDIRRIGSVKEGDEVVGSDTRVKVVKNKVAPPFKQAEFQILYGQGINRLGEIVDFGVKLGLIDKAGAWYSYNGDKIGQGKANAMQYLRDNKEVAEFLEQKIKAELLGDIKPVAKEGAEVEEESAEQE.

65-72 (GPESSGKT) contacts ATP.

The protein belongs to the RecA family.

It is found in the cytoplasm. Can catalyze the hydrolysis of ATP in the presence of single-stranded DNA, the ATP-dependent uptake of single-stranded DNA by duplex DNA, and the ATP-dependent hybridization of homologous single-stranded DNAs. It interacts with LexA causing its activation and leading to its autocatalytic cleavage. In Saccharophagus degradans (strain 2-40 / ATCC 43961 / DSM 17024), this protein is Protein RecA.